Consider the following 352-residue polypeptide: Photosystem II D2 protein (352 aa).

The residue at position 2 (T2) is an N-acetylthreonine. Phosphothreonine is present on T2. A helical membrane pass occupies residues 40-60 (CAYFALGGWLTGTTFVTSWYT). Position 117 (H117) interacts with chlorophyll a. A helical transmembrane segment spans residues 124 to 140 (GFMLRQFEIARSVNLRP). Residues Q129 and N142 each contribute to the pheophytin a site. A helical transmembrane segment spans residues 152-165 (VFVSVFLIYPLGQS). Position 197 (H197) interacts with chlorophyll a. Residues 207–227 (AALLCAIHGATVENTLFEDGD) traverse the membrane as a helical segment. A plastoquinone is bound by residues H214 and F261. H214 provides a ligand contact to Fe cation. H268 lines the Fe cation pocket. The chain crosses the membrane as a helical span at residues 278–294 (GLWMSAIGVVGLALNLR).

This sequence belongs to the reaction center PufL/M/PsbA/D family. PSII is composed of 1 copy each of membrane proteins PsbA, PsbB, PsbC, PsbD, PsbE, PsbF, PsbH, PsbI, PsbJ, PsbK, PsbL, PsbM, PsbT, PsbX, PsbY, PsbZ, Psb30/Ycf12, at least 3 peripheral proteins of the oxygen-evolving complex and a large number of cofactors. It forms dimeric complexes. The D1/D2 heterodimer binds P680, chlorophylls that are the primary electron donor of PSII, and subsequent electron acceptors. It shares a non-heme iron and each subunit binds pheophytin, quinone, additional chlorophylls, carotenoids and lipids. There is also a Cl(-1) ion associated with D1 and D2, which is required for oxygen evolution. The PSII complex binds additional chlorophylls, carotenoids and specific lipids. serves as cofactor. Phosphorylated in vitro.

It localises to the plastid. It is found in the chloroplast thylakoid membrane. The catalysed reaction is 2 a plastoquinone + 4 hnu + 2 H2O = 2 a plastoquinol + O2. Functionally, photosystem II (PSII) is a light-driven water:plastoquinone oxidoreductase that uses light energy to abstract electrons from H(2)O, generating O(2) and a proton gradient subsequently used for ATP formation. It consists of a core antenna complex that captures photons, and an electron transfer chain that converts photonic excitation into a charge separation. The D1/D2 (PsbA/PsbD) reaction center heterodimer binds P680, the primary electron donor of PSII as well as several subsequent electron acceptors. D2 is needed for assembly of a stable PSII complex. The chain is Photosystem II D2 protein from Chlamydomonas reinhardtii (Chlamydomonas smithii).